Reading from the N-terminus, the 515-residue chain is Maturase K (515 aa).

Belongs to the intron maturase 2 family. MatK subfamily.

Its subcellular location is the plastid. It is found in the chloroplast. In terms of biological role, usually encoded in the trnK tRNA gene intron. Probably assists in splicing its own and other chloroplast group II introns. The polypeptide is Maturase K (Pinus patula (Mexican weeping pine)).